The sequence spans 584 residues: MITRMSELFLRTLRDDPADAEVPSHKLLIRAGYVRPVGPGLYTWLPLGLRVFRKIEQIVRDEMTAIGGQEILFPALLPRAPYETTNRWTEYGDTLFRLKDRRDNDYLLGPTHEELFTLTVKGEYSSYKDFPLILFQIQTKYRDEARPRAGILRGREFVMKDSYSFDVDDDGLKTAYHLHREAYQRIFARLGVHYVIVSAVSGAMGGSASEEFLAESEVGEDTFVRCLQSGYAANVEAVLTRVPEPLPIEGQPEAVVYDTPDAPTIATLVDWANGADLPNFAGRAVTAADTLKNVLVKVREPGGEWELLAVGVPGDREVDDKRLGAALEPAEYALLDEADFARHPFLVKGYVGPKALLDNGVRYLVDPRVVDGTAWITGADAPNKHVVGLVAGRDFVADGTIEAAEVRDGDPSPDGAGPLVSARGIEIGHIFQLGRKYTEAFSADVLGEDGKPVRLTMGSYGIGVSRLVAVIAEQQHDELGLRWPAAVAPFDVHVVIANKDDGARTGATELAGELDRLGLEVLLDDRKSSPGVKFKDAELLGVPWIVVVGRGWGDGVVELRDRFSGEKREIGVDDAATEILATVR.

This sequence belongs to the class-II aminoacyl-tRNA synthetase family. ProS type 1 subfamily. As to quaternary structure, homodimer.

It localises to the cytoplasm. It catalyses the reaction tRNA(Pro) + L-proline + ATP = L-prolyl-tRNA(Pro) + AMP + diphosphate. Catalyzes the attachment of proline to tRNA(Pro) in a two-step reaction: proline is first activated by ATP to form Pro-AMP and then transferred to the acceptor end of tRNA(Pro). As ProRS can inadvertently accommodate and process non-cognate amino acids such as alanine and cysteine, to avoid such errors it has two additional distinct editing activities against alanine. One activity is designated as 'pretransfer' editing and involves the tRNA(Pro)-independent hydrolysis of activated Ala-AMP. The other activity is designated 'posttransfer' editing and involves deacylation of mischarged Ala-tRNA(Pro). The misacylated Cys-tRNA(Pro) is not edited by ProRS. This chain is Proline--tRNA ligase, found in Mycobacterium sp. (strain KMS).